The following is a 332-amino-acid chain: NADH-quinone oxidoreductase subunit H (332 aa).

Helical transmembrane passes span 8 to 28 (IIEC…LAGF), 44 to 66 (IGPN…KLFA), 78 to 98 (PIFI…MAPI), 120 to 140 (VGIL…LLAG), 157 to 177 (IQFL…LMII), 196 to 216 (WLIF…YVEL), 245 to 265 (MFFI…SLVF), 274 to 294 (FIPG…LFMW), and 312 to 332 (WKIM…ILLF).

Belongs to the complex I subunit 1 family. As to quaternary structure, NDH-1 is composed of 14 different subunits. Subunits NuoA, H, J, K, L, M, N constitute the membrane sector of the complex.

The protein resides in the cell inner membrane. It carries out the reaction a quinone + NADH + 5 H(+)(in) = a quinol + NAD(+) + 4 H(+)(out). Its function is as follows. NDH-1 shuttles electrons from NADH, via FMN and iron-sulfur (Fe-S) centers, to quinones in the respiratory chain. The immediate electron acceptor for the enzyme in this species is believed to be ubiquinone. Couples the redox reaction to proton translocation (for every two electrons transferred, four hydrogen ions are translocated across the cytoplasmic membrane), and thus conserves the redox energy in a proton gradient. This subunit may bind ubiquinone. This is NADH-quinone oxidoreductase subunit H from Helicobacter hepaticus (strain ATCC 51449 / 3B1).